Consider the following 535-residue polypeptide: cAMP-regulated D2 protein (535 aa).

The first 20 residues, 1 to 20 (MNKLLVFILLLLLLINISFA), serve as a signal peptide directing secretion. Cys-89 and Cys-109 are joined by a disulfide. The active-site Acyl-ester intermediate is Ser-213. A disulfide bridge connects residues Cys-265 and Cys-272. Active-site charge relay system residues include Glu-338 and His-440. Residue Asn-500 is glycosylated (N-linked (GlcNAc...) asparagine).

This sequence belongs to the type-B carboxylesterase/lipase family.

Its subcellular location is the cytoplasmic vesicle. It is found in the esterosome membrane. This is cAMP-regulated D2 protein (D2) from Dictyostelium discoideum (Social amoeba).